Consider the following 107-residue polypeptide: Large ribosomal subunit protein P2 (107 aa).

Residues 86 to 107 (PAAAAAEAEEEDDDDMGFGLFD) form a disordered region. Positions 92 to 101 (EAEEEDDDDM) are enriched in acidic residues.

This sequence belongs to the eukaryotic ribosomal protein P1/P2 family. P1 and P2 exist as dimers at the large ribosomal subunit. Phosphorylated.

Its function is as follows. Plays an important role in the elongation step of protein synthesis. This Trypanosoma brucei brucei protein is Large ribosomal subunit protein P2.